Consider the following 655-residue polypeptide: Chaperone protein dnaK1 (655 aa).

At Thr-197 the chain carries Phosphothreonine; by autocatalysis.

It belongs to the heat shock protein 70 family.

In terms of biological role, acts as a chaperone. The sequence is that of Chaperone protein dnaK1 (dnaK1) from Synechococcus elongatus (strain ATCC 33912 / PCC 7942 / FACHB-805) (Anacystis nidulans R2).